We begin with the raw amino-acid sequence, 448 residues long: Chaperone SurA (448 aa).

An N-terminal signal peptide occupies residues 1–27; it reads MKKTLRFAAVASGLVASLITVAPSASA. 2 PpiC domains span residues 185–288 and 301–399; these read QQDL…RLVE and IVQT…QVLG.

It is found in the periplasm. The enzyme catalyses [protein]-peptidylproline (omega=180) = [protein]-peptidylproline (omega=0). Its function is as follows. Chaperone involved in the correct folding and assembly of outer membrane proteins. Recognizes specific patterns of aromatic residues and the orientation of their side chains, which are found more frequently in integral outer membrane proteins. May act in both early periplasmic and late outer membrane-associated steps of protein maturation. This chain is Chaperone SurA, found in Burkholderia pseudomallei (strain 1710b).